Here is a 589-residue protein sequence, read N- to C-terminus: Vomeromodulin (589 aa).

The N-terminal stretch at 1–29 (MWVLQALAIMLSIQAGVLDLVEVPPVVRS) is a signal peptide. Disordered stretches follow at residues 49–71 (GLNDPAKNRMLPPKRPGAPSRGG) and 146–170 (LLGKEGNEDPSKPSSGSKATGGLGQ). N-linked (GlcNAc...) asparagine glycans are attached at residues Asn-419 and Asn-437.

Post-translationally, N-glycosylated. The N-glycans consist mainly of complex sialylated and fucosylated biantennary structures. In terms of tissue distribution, abundant in the lateral nasal glands. Also present in the posterior septal and vomeronasal glands.

It is found in the secreted. This is Vomeromodulin from Rattus norvegicus (Rat).